The following is a 332-amino-acid chain: MNKKTLVSGITSTGKLTLGNYIGAIRNFVKLQDEFNMFIFVADLHSLTNEIVPSVLRKNIKEIAALYLACGLDPEKTVLFKQSDVYEHGLMQWILLNQTTIGELSRMTQFKDKSSKITHANNTESIPSGLLTYPTLMAADILLYNPNLVPVGQDQVQHLELTRKIARKLNNKYNTKFNEPTTFVPETGAKIMSLTNPTKKMSKSSDDINGTIFLLEDPELAYKKIKKSITDSENKVYHDPSKPGVSNLLEIYACLENKSLKEAQEIFKDKNYLELKEGVGNSVKNFLTKLQAKYQENYKRVDEILNQGKIKAQKVASYNLNNLMKKIGIRDK.

ATP is bound by residues 11-13 (TST) and 19-20 (GN). The short motif at 12–20 (STGKLTLGN) is the 'HIGH' region element. Position 140 (Asp140) interacts with L-tryptophan. Residues 152 to 154 (GQD), Ile191, and 200 to 204 (KMSKS) contribute to the ATP site. The short motif at 200–204 (KMSKS) is the 'KMSKS' region element.

This sequence belongs to the class-I aminoacyl-tRNA synthetase family. In terms of assembly, homodimer.

It localises to the cytoplasm. It catalyses the reaction tRNA(Trp) + L-tryptophan + ATP = L-tryptophyl-tRNA(Trp) + AMP + diphosphate + H(+). Catalyzes the attachment of tryptophan to tRNA(Trp). This is Tryptophan--tRNA ligase from Mycoplasmopsis pulmonis (strain UAB CTIP) (Mycoplasma pulmonis).